A 278-amino-acid chain; its full sequence is Hydroxyethylthiazole kinase (278 aa).

M48 serves as a coordination point for substrate. 2 residues coordinate ATP: R124 and T175. Residue G202 participates in substrate binding.

Belongs to the Thz kinase family. Requires Mg(2+) as cofactor.

The enzyme catalyses 5-(2-hydroxyethyl)-4-methylthiazole + ATP = 4-methyl-5-(2-phosphooxyethyl)-thiazole + ADP + H(+). Its pathway is cofactor biosynthesis; thiamine diphosphate biosynthesis; 4-methyl-5-(2-phosphoethyl)-thiazole from 5-(2-hydroxyethyl)-4-methylthiazole: step 1/1. Functionally, catalyzes the phosphorylation of the hydroxyl group of 4-methyl-5-beta-hydroxyethylthiazole (THZ). This Clostridium botulinum (strain Alaska E43 / Type E3) protein is Hydroxyethylthiazole kinase.